Here is a 255-residue protein sequence, read N- to C-terminus: F-box/SPRY domain-containing protein 1 (255 aa).

The F-box domain occupies 3–51 (DPVAALCNFNVLEVIFSYLDLNDLSRCSQVCRSWHHFLNDENSDVWRWH). A B30.2/SPRY domain is found at 61 to 253 (MKSDLLTSVS…VSMVYLGTPL (193 aa)).

The protein belongs to the FBXO45/Fsn family. As to quaternary structure, component of an E3 ubiquitin ligase complex composed of hiw and Fsn.

It localises to the synapse. Its pathway is protein modification; protein ubiquitination. Functionally, required in the presynaptic motoneuron to down-regulate the levels of wnd and restrain synaptic terminal growth at the neuromuscular junction (NMJ). In Drosophila willistoni (Fruit fly), this protein is F-box/SPRY domain-containing protein 1.